The chain runs to 373 residues: Alanine racemase (373 aa).

Lysine 35 functions as the Proton acceptor; specific for D-alanine in the catalytic mechanism. Lysine 35 is modified (N6-(pyridoxal phosphate)lysine). Substrate is bound at residue arginine 130. Tyrosine 253 (proton acceptor; specific for L-alanine) is an active-site residue. Methionine 305 provides a ligand contact to substrate.

It belongs to the alanine racemase family. Pyridoxal 5'-phosphate serves as cofactor.

The catalysed reaction is L-alanine = D-alanine. It functions in the pathway amino-acid biosynthesis; D-alanine biosynthesis; D-alanine from L-alanine: step 1/1. Functionally, catalyzes the interconversion of L-alanine and D-alanine. May also act on other amino acids. This chain is Alanine racemase (alr), found in Cupriavidus necator (strain ATCC 17699 / DSM 428 / KCTC 22496 / NCIMB 10442 / H16 / Stanier 337) (Ralstonia eutropha).